The sequence spans 344 residues: Fructose-bisphosphate aldolase (344 aa).

Ser53 provides a ligand contact to D-glyceraldehyde 3-phosphate. The Proton donor role is filled by Asp95. Zn(2+) contacts are provided by His96, Asp131, Glu161, and His212. Gly213 contributes to the dihydroxyacetone phosphate binding site. His252 is a Zn(2+) binding site. Dihydroxyacetone phosphate-binding positions include 253–255 (GGS) and 274–277 (NVDT).

Belongs to the class II fructose-bisphosphate aldolase family. Requires Zn(2+) as cofactor.

The catalysed reaction is beta-D-fructose 1,6-bisphosphate = D-glyceraldehyde 3-phosphate + dihydroxyacetone phosphate. The protein operates within carbohydrate degradation; glycolysis; D-glyceraldehyde 3-phosphate and glycerone phosphate from D-glucose: step 4/4. Functionally, catalyzes the aldol condensation of dihydroxyacetone phosphate (DHAP or glycerone-phosphate) with glyceraldehyde 3-phosphate (G3P) to form fructose 1,6-bisphosphate (FBP) in gluconeogenesis and the reverse reaction in glycolysis. The chain is Fructose-bisphosphate aldolase (fba) from Mycobacterium bovis (strain ATCC BAA-935 / AF2122/97).